The following is a 159-amino-acid chain: Transcriptional repressor NrdR (159 aa).

A zinc finger lies at 3-34; sequence CPYCQSEDTQVKDSRPAEDGAAIRRRRVCPDC. The 91-residue stretch at 49-139 folds into the ATP-cone domain; it reads LVVVKKSGRK…VYRNFREAKD (91 aa).

The protein belongs to the NrdR family. Zn(2+) serves as cofactor.

Functionally, negatively regulates transcription of bacterial ribonucleotide reductase nrd genes and operons by binding to NrdR-boxes. The chain is Transcriptional repressor NrdR from Mesorhizobium japonicum (strain LMG 29417 / CECT 9101 / MAFF 303099) (Mesorhizobium loti (strain MAFF 303099)).